Reading from the N-terminus, the 640-residue chain is Probable potassium transport system protein Kup 1 (640 aa).

Transmembrane regions (helical) follow at residues 24–44 (LGAL…TSPL), 67–87 (IASL…VLFV), 116–136 (VGPL…DGMI), 154–174 (PFFA…LFTI), 186–206 (FGPV…TEVV), 222–242 (TFLF…VLAV), 264–284 (WFAL…ALIL), 296–316 (MLVP…ATVI), 354–374 (IYIP…VVGF), 382–402 (AAYG…ALVV), 411–431 (LWLC…FLGA), and 436–456 (VTQG…LMAT).

It belongs to the HAK/KUP transporter (TC 2.A.72) family.

The protein localises to the cell inner membrane. The catalysed reaction is K(+)(in) + H(+)(in) = K(+)(out) + H(+)(out). Transport of potassium into the cell. Likely operates as a K(+):H(+) symporter. This is Probable potassium transport system protein Kup 1 from Paramagnetospirillum magneticum (strain ATCC 700264 / AMB-1) (Magnetospirillum magneticum).